A 261-amino-acid chain; its full sequence is Cytochrome c oxidase subunit 3 (261 aa).

The Mitochondrial matrix segment spans residues 1-15 (MTHQTHAYHMVNPSP). A helical membrane pass occupies residues 16-34 (WPLTGALSALLMTSGLVMW). Residues 35–40 (FHYNST) are Mitochondrial intermembrane-facing. A helical transmembrane segment spans residues 41–66 (LLLTLGLTTNLLTMYQWWRDIIREST). At 67 to 72 (FQGHHT) the chain is on the mitochondrial matrix side. The chain crosses the membrane as a helical span at residues 73-105 (PAVQKGLRYGMILFIISEVFFFSGFFWAFYHSS). Over 106-128 (LAPTPELGGCWPPTGIHPLNPME) the chain is Mitochondrial intermembrane. The helical transmembrane segment at 129-152 (VPLLNTSVLLASGVSITWAHHSLM) threads the bilayer. Residues 153 to 155 (EGN) lie on the Mitochondrial matrix side of the membrane. Residues 156-183 (RKHMLQALFITISLGIYFTLLQASEYYE) traverse the membrane as a helical segment. Over 184 to 190 (APFTISD) the chain is Mitochondrial intermembrane. Residues 191 to 223 (GVYGSTFFVATGFHGLHVIIGSTFLIVCFLRQL) form a helical membrane-spanning segment. Residues 224 to 232 (KFHFTSNHH) are Mitochondrial matrix-facing. A helical membrane pass occupies residues 233 to 256 (FGFEAAAWYWHFVDVVWLFLYVSI). Residues 257-261 (YWWGS) lie on the Mitochondrial intermembrane side of the membrane.

It belongs to the cytochrome c oxidase subunit 3 family. Component of the cytochrome c oxidase (complex IV, CIV), a multisubunit enzyme composed of 14 subunits. The complex is composed of a catalytic core of 3 subunits MT-CO1, MT-CO2 and MT-CO3, encoded in the mitochondrial DNA, and 11 supernumerary subunits COX4I, COX5A, COX5B, COX6A, COX6B, COX6C, COX7A, COX7B, COX7C, COX8 and NDUFA4, which are encoded in the nuclear genome. The complex exists as a monomer or a dimer and forms supercomplexes (SCs) in the inner mitochondrial membrane with NADH-ubiquinone oxidoreductase (complex I, CI) and ubiquinol-cytochrome c oxidoreductase (cytochrome b-c1 complex, complex III, CIII), resulting in different assemblies (supercomplex SCI(1)III(2)IV(1) and megacomplex MCI(2)III(2)IV(2)).

It is found in the mitochondrion inner membrane. The enzyme catalyses 4 Fe(II)-[cytochrome c] + O2 + 8 H(+)(in) = 4 Fe(III)-[cytochrome c] + 2 H2O + 4 H(+)(out). Component of the cytochrome c oxidase, the last enzyme in the mitochondrial electron transport chain which drives oxidative phosphorylation. The respiratory chain contains 3 multisubunit complexes succinate dehydrogenase (complex II, CII), ubiquinol-cytochrome c oxidoreductase (cytochrome b-c1 complex, complex III, CIII) and cytochrome c oxidase (complex IV, CIV), that cooperate to transfer electrons derived from NADH and succinate to molecular oxygen, creating an electrochemical gradient over the inner membrane that drives transmembrane transport and the ATP synthase. Cytochrome c oxidase is the component of the respiratory chain that catalyzes the reduction of oxygen to water. Electrons originating from reduced cytochrome c in the intermembrane space (IMS) are transferred via the dinuclear copper A center (CU(A)) of subunit 2 and heme A of subunit 1 to the active site in subunit 1, a binuclear center (BNC) formed by heme A3 and copper B (CU(B)). The BNC reduces molecular oxygen to 2 water molecules using 4 electrons from cytochrome c in the IMS and 4 protons from the mitochondrial matrix. The polypeptide is Cytochrome c oxidase subunit 3 (MT-CO3) (Rhinoceros unicornis (Greater Indian rhinoceros)).